Reading from the N-terminus, the 3425-residue chain is Genome polyprotein (3425 aa).

The interval 3–16 (NKKPGRPGSGRVVN) is interaction with host EXOC1. Residues 38–73 (VLRGAGPIRFVLALLTFFKFTALRPTIGMLKRWKLV) are hydrophobic; homodimerization of capsid protein C. A propeptide spans 105–120 (GGSCSWIIMLLPIVAG) (ER anchor for the capsid protein C, removed in mature form by serine protease NS3). A helical transmembrane segment spans residues 105–125 (GGSCSWIIMLLPIVAGLKLGN). N-linked (GlcNAc...) asparagine; by host glycosylation occurs at asparagine 135. The next 2 membrane-spanning stretches (helical) occupy residues 247-267 (WALR…NLGT) and 273-293 (IIFT…CLGM). Cystine bridges form between cysteine 290/cysteine 317, cysteine 347/cysteine 403, cysteine 361/cysteine 392, cysteine 379/cysteine 408, cysteine 477/cysteine 575, and cysteine 592/cysteine 623. The tract at residues 385–398 (DRGWGNGCGLFGKG) is fusion peptide. Transmembrane regions (helical) follow at residues 740–760 (LFGG…LWMG) and 768–788 (ISMT…NVNA). An intrachain disulfide couples cysteine 792 to cysteine 803. Residues asparagine 918, asparagine 963, and asparagine 995 are each glycosylated (N-linked (GlcNAc...) asparagine; by host). 4 cysteine pairs are disulfide-bonded: cysteine 967/cysteine 1011, cysteine 1068/cysteine 1117, cysteine 1079/cysteine 1100, and cysteine 1101/cysteine 1104. The next 7 helical transmembrane spans lie at 1138–1158 (VMAF…VMIV), 1169–1189 (TAPI…FGGI), 1214–1234 (IVHL…IGFL), 1290–1310 (FALP…IDVV), 1337–1357 (MLLG…FAGL), 1369–1389 (WPVS…GGIA), and 1395–1415 (SMAI…VTGF). The segment at 1421–1460 (LEKASDISWSEEARVTGASQRFDVEIDQDGNMRLLNDPGV) is interacts with and activates NS3 protease. In terms of domain architecture, Peptidase S7 spans 1499 to 1676 (GGVIWDVPAP…EKKEEEVPQV (178 aa)). Active-site charge relay system; for serine protease NS3 activity residues include histidine 1549, aspartate 1573, and serine 1633. The Helicase ATP-binding domain occupies 1679 to 1835 (ENMLRKRQLT…DSNSPITDIE (157 aa)). The interval 1683–1686 (RKRQ) is important for RNA-binding. 1692–1699 (LHPGSGKT) serves as a coordination point for ATP. A DEAH box motif is present at residues 1783–1786 (DEAH). Residues 1845–2011 (SGYEWITDFQ…GLVAQLYGPE (167 aa)) enclose the Helicase C-terminal domain. The tract at residues 2162–2166 (EELPE) is regulates the ATPase activity of NS3 helicase. The next 8 helical transmembrane spans lie at 2169 to 2189 (ETFL…LFFV), 2194 to 2214 (LGKT…LWIA), 2216 to 2236 (VPAQ…IVLI), 2252 to 2272 (VFMI…MGWL), 2306 to 2326 (AWAA…HLII), 2334 to 2354 (LMAM…MPFV), 2371 to 2391 (FTMT…AFLV), and 2441 to 2461 (CVLV…LTLT). The 266-residue stretch at 2521–2786 (GGGTGRTLGE…DVDLGSGTRA (266 aa)) folds into the mRNA cap 0-1 NS5-type MT domain. Serine 2576 contributes to the S-adenosyl-L-methionine binding site. Serine 2576 carries the phosphoserine modification. The For 2'-O-MTase activity role is filled by lysine 2581. Positions 2606, 2607, 2624, 2625, and 2652 each coordinate S-adenosyl-L-methionine. The active-site For 2'-O-MTase activity is the aspartate 2666. Residue isoleucine 2667 participates in S-adenosyl-L-methionine binding. Active-site for 2'-O-MTase activity residues include lysine 2702 and glutamate 2738. Residue tyrosine 2740 coordinates S-adenosyl-L-methionine. Residues glutamate 2960, histidine 2964, cysteine 2969, and cysteine 2972 each contribute to the Zn(2+) site. In terms of domain architecture, RdRp catalytic spans 3050–3202 (GLMYADDTAG…KPADDRFATA (153 aa)). Positions 3237, 3253, and 3372 each coordinate Zn(2+). The short motif at 3423-3425 (GVL) is the PDZ-binding element.

The protein in the N-terminal section; belongs to the class I-like SAM-binding methyltransferase superfamily. mRNA cap 0-1 NS5-type methyltransferase family. In terms of assembly, homodimer. As to quaternary structure, forms heterodimers with envelope protein E in the endoplasmic reticulum and Golgi. Homodimer; in the endoplasmic reticulum and Golgi. Interacts with protein prM. Interacts with non-structural protein 1. In terms of assembly, homodimer; Homohexamer when secreted. Interacts with envelope protein E. NS1 interacts with NS4B. Interacts with host MAVS (via C-terminus); this interaction blocks the interaction of MAVS with RIGI or IFIH1/MDA5. As to quaternary structure, interacts (via N-terminus) with serine protease NS3. Forms a heterodimer with serine protease NS3. May form homooligomers. In terms of assembly, forms a heterodimer with NS2B. Interacts with non-structural protein 2A (via N-terminus). Interacts with NS4B. Interacts with unphosphorylated RNA-directed RNA polymerase NS5; this interaction stimulates RNA-directed RNA polymerase NS5 guanylyltransferase activity. As to quaternary structure, interacts with serine protease NS3. Homodimer. Specific enzymatic cleavages in vivo yield mature proteins. Cleavages in the lumen of endoplasmic reticulum are performed by host signal peptidase, whereas cleavages in the cytoplasmic side are performed by serine protease NS3. Signal cleavage at the 2K-4B site requires a prior NS3 protease-mediated cleavage at the 4A-2K site. Both NS2A and NS2B proteins are required in cis for NS2A/2B proteolytic processing. In terms of processing, cleaved in post-Golgi vesicles by a host furin, releasing the mature small envelope protein M, and peptide pr. This cleavage is incomplete as up to 30% of viral particles still carry uncleaved prM. Post-translationally, N-glycosylated. N-glycosylated. The excreted form is glycosylated and this is required for efficient secretion of the protein from infected cells. In terms of processing, phosphorylated on serines residues. This phosphorylation may trigger NS5 nuclear localization.

The protein localises to the virion. Its subcellular location is the host nucleus. It localises to the host cytoplasm. The protein resides in the host perinuclear region. It is found in the secreted. The protein localises to the virion membrane. Its subcellular location is the host endoplasmic reticulum membrane. The enzyme catalyses Selective hydrolysis of -Xaa-Xaa-|-Yaa- bonds in which each of the Xaa can be either Arg or Lys and Yaa can be either Ser or Ala.. It carries out the reaction RNA(n) + a ribonucleoside 5'-triphosphate = RNA(n+1) + diphosphate. The catalysed reaction is a ribonucleoside 5'-triphosphate + H2O = a ribonucleoside 5'-diphosphate + phosphate + H(+). It catalyses the reaction ATP + H2O = ADP + phosphate + H(+). The enzyme catalyses a 5'-end (5'-triphosphoguanosine)-ribonucleoside in mRNA + S-adenosyl-L-methionine = a 5'-end (N(7)-methyl 5'-triphosphoguanosine)-ribonucleoside in mRNA + S-adenosyl-L-homocysteine. It carries out the reaction a 5'-end (N(7)-methyl 5'-triphosphoguanosine)-ribonucleoside in mRNA + S-adenosyl-L-methionine = a 5'-end (N(7)-methyl 5'-triphosphoguanosine)-(2'-O-methyl-ribonucleoside) in mRNA + S-adenosyl-L-homocysteine + H(+). In terms of biological role, capsid protein self-assembles to form an icosahedral capsid about 40 nm in diameter. Plays a role in virus budding by binding to the cell membrane and gathering the viral RNA into a nucleocapsid that forms the core of a mature virus particle. Functionally, prevents premature fusion activity of envelope proteins in trans-Golgi by binding to envelope protein E at pH6.0. After virion release in extracellular space, gets dissociated from E dimers. Acts as a chaperone for envelope protein E during intracellular virion assembly by masking and inactivating envelope protein E fusion peptide. prM is the only viral peptide matured by host furin in the trans-Golgi network probably to avoid catastrophic activation of the viral fusion activity in acidic Golgi compartment prior to virion release. prM-E cleavage is inefficient, and many virions are only partially matured. These uncleaved prM would play a role in immune evasion. Its function is as follows. May play a role in virus budding. Exerts cytotoxic effects by activating a mitochondrial apoptotic pathway through M ectodomain. May display a viroporin activity. In terms of biological role, binds to host cell surface receptor and mediates fusion between viral and cellular membranes. Envelope protein is synthesized in the endoplasmic reticulum in the form of heterodimer with protein prM. They play a role in virion budding in the ER, and the newly formed immature particle is covered with 60 spikes composed of heterodimer between precursor prM and envelope protein E. The virion is transported to the Golgi apparatus where the low pH causes dissociation of PrM-E heterodimers and formation of E homodimers. Functionally, involved in immune evasion, pathogenesis and viral replication. Interacts with host MAVS and blocks MAVS binding to RIGI or IFIH1/MDA5, thereby leading to evasion of the innate immune response. Once cleaved off the polyprotein, is targeted to three destinations: the viral replication cycle, the plasma membrane and the extracellular compartment. Essential for viral replication. Required for formation of the replication complex and recruitment of other non-structural proteins to the ER-derived membrane structures. Excreted as a hexameric lipoparticle that plays a role against host immune response. Component of the viral RNA replication complex that functions in virion assembly. Its function is as follows. Required cofactor for the serine protease function of NS3. May have membrane-destabilizing activity and form viroporins. In terms of biological role, displays three enzymatic activities: serine protease, NTPase and RNA helicase. NS3 serine protease, in association with NS2B, performs its autocleavage and cleaves the polyprotein at dibasic sites in the cytoplasm: C-prM, NS2A-NS2B, NS2B-NS3, NS3-NS4A, NS4A-2K and NS4B-NS5. NS3 RNA helicase binds RNA and unwinds dsRNA in the 3' to 5' direction. Functionally, regulates the ATPase activity of the NS3 helicase activity. NS4A allows NS3 helicase to conserve energy during unwinding. Functions as a signal peptide for NS4B. Its function is as follows. Induces the formation of ER-derived membrane vesicles where the viral replication takes place. In terms of biological role, replicates the viral (+) and (-) RNA genome, and performs the capping of genomes in the cytoplasm. NS5 methylates viral RNA cap at guanine N-7 and ribose 2'-O positions. This Anas (ducks) protein is Genome polyprotein.